Consider the following 243-residue polypeptide: Probable transcriptional regulatory protein Bpet3099 (243 aa).

The interval 1-21 is disordered; that stretch reads MAGHSKWANIQHRKGRQDAKR.

The protein belongs to the TACO1 family.

The protein localises to the cytoplasm. In Bordetella petrii (strain ATCC BAA-461 / DSM 12804 / CCUG 43448), this protein is Probable transcriptional regulatory protein Bpet3099.